The following is a 295-amino-acid chain: uncharacterized protein (295 aa).

Residues 1 to 58 form the HTH lysR-type domain; sequence MESGDLRVFQMVAREGTITKAALQLGYVQSNVTARIQQLEAELGTTLFLRHNRGMTLS. A DNA-binding region (H-T-H motif) is located at residues 18–37; that stretch reads ITKAALQLGYVQSNVTARIQ.

It belongs to the LysR transcriptional regulatory family.

This is an uncharacterized protein from Bacillus subtilis (strain 168).